The chain runs to 2476 residues: Zonadhesin (2476 aa).

The N-terminal stretch at 1–29 is a signal peptide; it reads MLGLPALAGPMAMPHPPLIPSTPTLLAFS. Topologically, residues 30-2418 are extracellular; sequence FPGGFYMLLD…SPKKPEASNR (2389 aa). 2 MAM domains span residues 31–144 and 147–312; these read PGGF…PCEE and PQCD…TCRG. N-linked (GlcNAc...) asparagine glycans are attached at residues Asn-109 and Asn-269. 3 disordered regions span residues 313 to 332, 358 to 462, and 537 to 632; these read PSET…KPTV, PTVP…TERT, and ERTT…RTTI. Residues 319–687 form a 53 X approximate heptapeptide repeats (mucin-like domain) region; that stretch reads STEKPVAPTE…ATTVTPRTTI (369 aa). Residues 358 to 373 show a composition bias toward low complexity; sequence PTVPTEKPTIPTEKST. Over residues 400-412 the composition is skewed to pro residues; the sequence is TTPPEGPAVPPKG. The segment covering 423–433 has biased composition (basic and acidic residues); sequence HTEKSTVHTEK. Residues 451 to 462 show a composition bias toward low complexity; sequence PTKRTTTPTERT. The TIL 1 domain occupies 690-739; that stretch reads CPPNAHFERCACPVSCQSPTPNCELFCKPGCVCDPGFLFSGSHCVNASSC. Residues Asn-735, Asn-758, and Asn-833 are each glycosylated (N-linked (GlcNAc...) asparagine). Positions 740 to 794 constitute a VWFC 1 domain; the sequence is DCFYNDNYYKLGTDWFSPNCTEHCHCRPSSRMECQTFKCGTHTVCQLKNGQYGCH. Positions 799-976 constitute a VWFD 1 domain; sequence ATCSVYGDPH…TSEDADQQCE (178 aa). Intrachain disulfides connect Cys-801-Cys-936 and Cys-823-Cys-975. A disordered region spans residues 943-983; that stretch reads SSNDNQKPDGSPAKDEKELGSSWQTSEDADQQCEENQVSPP. The 54-residue stretch at 1070–1123 folds into the TIL 2 domain; sequence CPRNSRYTLCARLCPDTCHSEFSGRACKDRCVEGCECDPGFVLSGLQCVSRSEC. The region spanning 1124 to 1180 is the VWFC 2 domain; that stretch reads GCLDSTAGYVKVGERWFKPGCRQLCICEGNNRTRCVLWRCQAQEFCGQQDGIYGCHA. The N-linked (GlcNAc...) asparagine glycan is linked to Asn-1154. Positions 1184 to 1364 constitute a VWFD 2 domain; sequence ATCTVSGDPH…INELSEPGCF (181 aa). Intrachain disulfides connect Cys-1186/Cys-1324 and Cys-1208/Cys-1363. 2 N-linked (GlcNAc...) asparagine glycosylation sites follow: Asn-1329 and Asn-1448. One can recognise a TIL 3 domain in the interval 1456–1511; that stretch reads CPSGSSYSTCANPCPATCLSLNNPSYCPSTLPCAEGCECQKGHILSGTSCVPLSQC. The VWFC 3 domain maps to 1512-1568; the sequence is GCTTQRGSYHPVGESWYTDNSCSRLCTCSAHNNISCRQASCKPSQMCWPQDGLIRCR. N-linked (GlcNAc...) asparagine glycans are attached at residues Asn-1544, Asn-1596, and Asn-1654. The 179-residue stretch at 1573–1751 folds into the VWFD 3 domain; that stretch reads GVCRIPDTSH…RDKEIDPNCQ (179 aa). Disulfide bonds link Cys-1575-Cys-1712 and Cys-1597-Cys-1750. The span at 1747-1759 shows a compositional bias: basic and acidic residues; sequence DPNCQEDDRKTEA. The segment at 1747–1768 is disordered; it reads DPNCQEDDRKTEAESQEQPSAN. Asn-1843 is a glycosylation site (N-linked (GlcNAc...) asparagine). The region spanning 1851–1907 is the TIL 4 domain; it reads CSAHSVYTSCVPSCLPSCQDPEGQCTGAGAPSTCEEGCICEPGYVLSEQQCVARSQC. In terms of domain architecture, VWFC 4 spans 1908–1963; sequence GCRDARGTFLPVGRFRLSSGCSQMCVCTAGAIECRPFTCPSGSQCEPNEDGKDFCQ. A glycan (N-linked (GlcNAc...) asparagine) is linked at Asn-1965. Positions 1968 to 2145 constitute a VWFD 4 domain; that stretch reads NLCSVFGDPH…WEVKAKEGHP (178 aa). Cys-1970 and Cys-2107 form a disulfide bridge. N-linked (GlcNAc...) asparagine glycosylation is found at Asn-2122, Asn-2165, and Asn-2178. In terms of domain architecture, TIL 5 spans 2257-2310; sequence CPANTVYQSCMTPCPASCATLAVPRACDGPCVEGCASLPGYIYSGAQSLPMAHC. The VWFC 5 domain maps to 2311 to 2365; sequence GCTNNGVYYQQGDSFVTENCSQRCTCASSGVLLCEPLSCRPGEICTLGNLTRGCF. 2 N-linked (GlcNAc...) asparagine glycosylation sites follow: Asn-2329 and Asn-2359. Residues 2366-2402 enclose the EGF-like domain; the sequence is RDSPCLQNPCQNDGRCREQGTHFTCECELGYGGDLCT. Cystine bridges form between Cys-2370-Cys-2381, Cys-2375-Cys-2390, and Cys-2392-Cys-2401. Residues 2419–2439 traverse the membrane as a helical segment; sequence VAILLGMLMPTVLLVPAVTRV. The disordered stretch occupies residues 2438 to 2476; it reads RVSRKRRRRRRPSRERTQSQNRGKRAGTDCAPEQAYKVA. Basic residues predominate over residues 2439-2450; sequence VSRKRRRRRRPS. Over 2440-2476 the chain is Cytoplasmic; sequence SRKRRRRRRPSRERTQSQNRGKRAGTDCAPEQAYKVA.

As to quaternary structure, probably forms covalent oligomers. Post-translationally, the MAM domains and the mucin-like domains are missing from the zonadhesin that binds to the egg extracellular matrix. Processing might occur during sperm maturation and/or capacitation. In testis, primarily in haploid spermatids. Not in lung, liver, heart, spleen, brain, kidney, epididymis.

It localises to the cell membrane. Its function is as follows. Binds in a species-specific manner to the zona pellucida of the egg. May be involved in gamete recognition and/or signaling. This is Zonadhesin (ZAN) from Sus scrofa (Pig).